The sequence spans 256 residues: Trypsin alpha (256 aa).

A signal peptide spans 1–22; the sequence is MLKIVILLSAVVCALGGTVPEG. The propeptide at 23 to 30 is activation peptide; it reads LLPQLDGR. In terms of domain architecture, Peptidase S1 spans 31-254; sequence IVGGSATTIS…LRSWVISTAN (224 aa). Cys-56 and Cys-72 are disulfide-bonded. Residues His-71 and Asp-116 each act as charge relay system in the active site. 2 disulfides stabilise this stretch: Cys-180–Cys-197 and Cys-206–Cys-230. Ser-210 serves as the catalytic Charge relay system.

Belongs to the peptidase S1 family.

Its subcellular location is the secreted. The protein localises to the extracellular space. The enzyme catalyses Preferential cleavage: Arg-|-Xaa, Lys-|-Xaa.. The polypeptide is Trypsin alpha (alphaTry) (Drosophila erecta (Fruit fly)).